The following is a 624-amino-acid chain: Probable potassium transport system protein Kup 1 (624 aa).

The next 12 membrane-spanning stretches (helical) occupy residues Leu10–Leu30, Leu48–Phe68, Pro94–Thr114, Leu133–Ala153, Ile159–Ile179, Phe210–Gly230, Phe242–Val262, Pro270–Ala290, Ile331–Phe351, Ile363–Ile383, Thr388–Ala408, and Phe413–Ser433.

It belongs to the HAK/KUP transporter (TC 2.A.72) family.

It localises to the cell inner membrane. It catalyses the reaction K(+)(in) + H(+)(in) = K(+)(out) + H(+)(out). Functionally, transport of potassium into the cell. Likely operates as a K(+):H(+) symporter. This Legionella pneumophila (strain Paris) protein is Probable potassium transport system protein Kup 1.